We begin with the raw amino-acid sequence, 337 residues long: Visual pigment-like receptor peropsin (337 aa).

At 1-26 (MLRNNLGNSSDSKNEDGSVFSQTEHN) the chain is on the extracellular side. Residue asparagine 8 is glycosylated (N-linked (GlcNAc...) asparagine). A helical transmembrane segment spans residues 27–49 (IVATYLIMAGMISIISNIIVLGI). The Cytoplasmic portion of the chain corresponds to 50–61 (FIKYKELRTPTN). The helical transmembrane segment at 62 to 87 (AIIINLAVTDIGVSSIGYPMSAASDL) threads the bilayer. Residues 88 to 101 (YGSWKFGYAGCQVY) lie on the Extracellular side of the membrane. An intrachain disulfide couples cysteine 98 to cysteine 175. Residues 102-121 (AGLNIFFGMASIGLLTVVAV) traverse the membrane as a helical segment. The Cytoplasmic segment spans residues 122 to 140 (DRYLTICLPDVGRRMTTNT). The chain crosses the membrane as a helical span at residues 141–164 (YIGLILGAWINGLFWALMPIIGWA). At 165-188 (SYAPDPTGATCTINWRKNDRSFVS) the chain is on the extracellular side. Residues 189 to 212 (YTMTVIAINFIVPLTVMFYCYYHV) traverse the membrane as a helical segment. Residues 213–240 (TLSIKHHTTSDCTESLNRDWSDQIDVTK) lie on the Cytoplasmic side of the membrane. The helical transmembrane segment at 241-264 (MSVIMICMFLVAWSPYSIVCLWAS) threads the bilayer. Topologically, residues 265-272 (FGDPKKIP) are extracellular. Residues 273–297 (PPMAIIAPLFAKSSTFYNPCIYVVA) form a helical membrane-spanning segment. Lysine 284 is subject to N6-(retinylidene)lysine. The Cytoplasmic segment spans residues 298-337 (NKKFRRAMLAMFKCQTHQTMPVTSILPMDVSQNPLASGRI).

Belongs to the G-protein coupled receptor 1 family. Opsin subfamily. Found only in the eye, where it is localized to the retinal pigment epithelium (RPE). In the RPE, it is localized to the microvilli that surround the photoreceptor outer segments.

The protein resides in the membrane. Functionally, may play a role in rpe physiology either by detecting light directly or by monitoring the concentration of retinoids or other photoreceptor-derived compounds. This chain is Visual pigment-like receptor peropsin (RRH), found in Homo sapiens (Human).